The following is a 166-amino-acid chain: Cofilin-2 (166 aa).

Residue Ala2 is modified to N-acetylalanine. Ser3 is modified (phosphoserine). The region spanning 4–153 is the ADF-H domain; sequence GVTVNDEVIK…KDRSTLGEKL (150 aa). Position 6 is a phosphothreonine (Thr6). Positions 30–34 match the Nuclear localization signal motif; sequence KKRKK.

This sequence belongs to the actin-binding proteins ADF family. In terms of assembly, interacts with CSRP3; possibly two molecules of CFL2 can interact with one molecule if CSRP3. Post-translationally, the phosphorylation of Ser-24 may prevent recognition of the nuclear localization signal. As to expression, predominantly expressed in skeletal muscle.

It is found in the nucleus matrix. The protein resides in the cytoplasm. It localises to the cytoskeleton. Functionally, controls reversibly actin polymerization and depolymerization in a pH-sensitive manner. It has the ability to bind G- and F-actin in a 1:1 ratio of cofilin to actin. It is the major component of intranuclear and cytoplasmic actin rods. Required for muscle maintenance. May play a role during the exchange of alpha-actin forms during the early postnatal remodeling of the sarcomere. This Mus musculus (Mouse) protein is Cofilin-2 (Cfl2).